The following is a 228-amino-acid chain: Lipoprotein-releasing system ATP-binding protein LolD (228 aa).

The 223-residue stretch at 6-228 folds into the ABC transporter domain; it reads LRLSGIEKTY…LSDGRLSAES (223 aa). An ATP-binding site is contributed by 43-50; the sequence is APSGAGKS.

This sequence belongs to the ABC transporter superfamily. Lipoprotein translocase (TC 3.A.1.125) family. In terms of assembly, the complex is composed of two ATP-binding proteins (LolD) and two transmembrane proteins (LolC and LolE).

It localises to the cell inner membrane. In terms of biological role, part of the ABC transporter complex LolCDE involved in the translocation of mature outer membrane-directed lipoproteins, from the inner membrane to the periplasmic chaperone, LolA. Responsible for the formation of the LolA-lipoprotein complex in an ATP-dependent manner. This Ruegeria pomeroyi (strain ATCC 700808 / DSM 15171 / DSS-3) (Silicibacter pomeroyi) protein is Lipoprotein-releasing system ATP-binding protein LolD.